A 735-amino-acid chain; its full sequence is Polyribonucleotide nucleotidyltransferase (735 aa).

D515 and D521 together coordinate Mg(2+). A KH domain is found at 581–641 (PKLELFSVDP…KNVDAAKDYI (61 aa)). Residues 649-671 (NSRGFGKKPHGHDRRDKDRQKPT) form a disordered region. Residues 675-734 (GDEFDGVVKSVVDFGAFIELKDGVDGLLHISKIKTPLNVGDRLKVCVSEQKGNKISLSLV) enclose the S1 motif domain.

The protein belongs to the polyribonucleotide nucleotidyltransferase family. The cofactor is Mg(2+).

The protein resides in the cytoplasm. The catalysed reaction is RNA(n+1) + phosphate = RNA(n) + a ribonucleoside 5'-diphosphate. In terms of biological role, involved in mRNA degradation. Catalyzes the phosphorolysis of single-stranded polyribonucleotides processively in the 3'- to 5'-direction. This is Polyribonucleotide nucleotidyltransferase from Campylobacter curvus (strain 525.92).